The sequence spans 603 residues: Replication protein E1 (603 aa).

The tract at residues 47–68 (DDNDLEQGNSRELFHQQESKES) is disordered. Over residues 58–68 (ELFHQQESKES) the composition is skewed to basic and acidic residues. The short motif at 76–78 (KRK) is the Nuclear localization signal element. A phosphoserine; by host mark is found at Ser-81 and Ser-89. A Nuclear export signal motif is present at residues 88 to 97 (LSPRLESITL). The DNA-binding region stretch occupies residues 143–306 (QLGTVDIHYK…TIVGHQSTEA (164 aa)). The region spanning 405–555 (VNFIMFLAAL…FPMKADNTPE (151 aa)) is the SF3 helicase domain. 431–438 (GPPNTGKS) serves as a coordination point for ATP. Lys-512 participates in a covalent cross-link: Glycyl lysine isopeptide (Lys-Gly) (interchain with G-Cter in SUMO). The disordered stretch occupies residues 578 to 603 (DQEDEGENGESQRSFQCSARSANEHL). The span at 586-603 (GESQRSFQCSARSANEHL) shows a compositional bias: polar residues.

This sequence belongs to the papillomaviridae E1 protein family. Can form hexamers. Interacts with E2 protein; this interaction increases E1 DNA binding specificity. Interacts with host DNA polymerase subunit POLA2. Interacts with host single stranded DNA-binding protein RPA1. Interacts with host TOP1; this interaction stimulates the enzymatic activity of TOP1. Phosphorylated. In terms of processing, sumoylated.

The protein localises to the host nucleus. It catalyses the reaction Couples ATP hydrolysis with the unwinding of duplex DNA by translocating in the 3'-5' direction.. The enzyme catalyses ATP + H2O = ADP + phosphate + H(+). ATP-dependent DNA 3'-5' helicase required for initiation of viral DNA replication. It forms a complex with the viral E2 protein. The E1-E2 complex binds to the replication origin which contains binding sites for both proteins. During the initial step, a dimer of E1 interacts with a dimer of protein E2 leading to a complex that binds the viral origin of replication with high specificity. Then, a second dimer of E1 displaces the E2 dimer in an ATP-dependent manner to form the E1 tetramer. Following this, two E1 monomers are added to each half of the site, which results in the formation of two E1 trimers on the viral ori. Subsequently, two hexamers will be created. The double hexamer acts as a bi-directional helicase machinery and unwinds the viral DNA and then recruits the host DNA polymerase to start replication. The sequence is that of Replication protein E1 from Human papillomavirus 21.